The sequence spans 462 residues: Fumarate hydratase class II (462 aa).

Substrate-binding positions include 97 to 99 (SGT), 128 to 131 (HPND), 138 to 140 (STN), and threonine 186. The active-site Proton donor/acceptor is histidine 187. The active site involves serine 317. Substrate contacts are provided by residues serine 318 and 323-325 (KVN).

It belongs to the class-II fumarase/aspartase family. Fumarase subfamily. As to quaternary structure, homotetramer.

It localises to the cytoplasm. It catalyses the reaction (S)-malate = fumarate + H2O. It functions in the pathway carbohydrate metabolism; tricarboxylic acid cycle; (S)-malate from fumarate: step 1/1. Its function is as follows. Involved in the TCA cycle. Catalyzes the stereospecific interconversion of fumarate to L-malate. The chain is Fumarate hydratase class II from Neisseria meningitidis serogroup A / serotype 4A (strain DSM 15465 / Z2491).